The primary structure comprises 142 residues: Probable inactive dual specificity protein phosphatase-like At4g18593 (142 aa).

This sequence belongs to the protein-tyrosine phosphatase family. Non-receptor class dual specificity subfamily.

The protein is Probable inactive dual specificity protein phosphatase-like At4g18593 of Arabidopsis thaliana (Mouse-ear cress).